Here is an 80-residue protein sequence, read N- to C-terminus: Calmodulin (80 aa).

2 EF-hand domains span residues D12–K47 and L48–K80. Residues D25, D27, N29, E36, D61, D63, D65, Q67, and E72 each coordinate Ca(2+).

Belongs to the calmodulin family.

Functionally, calmodulin mediates the control of a large number of enzymes, ion channels and other proteins by Ca(2+). Among the enzymes to be stimulated by the calmodulin-Ca(2+) complex are a number of protein kinases and phosphatases. This is Calmodulin from Strongylocentrotus purpuratus (Purple sea urchin).